The following is a 184-amino-acid chain: UPF0398 protein BCAH820_1652 (184 aa).

This sequence belongs to the UPF0398 family.

The protein is UPF0398 protein BCAH820_1652 of Bacillus cereus (strain AH820).